The following is a 453-amino-acid chain: Bifunctional protein GlmU (453 aa).

The interval 1–226 is pyrophosphorylase; sequence MKFSTVILAA…SIEVEGVNDR (226 aa). UDP-N-acetyl-alpha-D-glucosamine contacts are provided by residues 8-11, K22, Q73, 78-79, 100-102, G137, E151, N166, and N224; these read LAAG, GT, and YGD. A Mg(2+)-binding site is contributed by D102. Residue N224 participates in Mg(2+) binding. Positions 227–247 are linker; that stretch reads IQLARLERAFQARQAKKLLEQ. The interval 248–453 is N-acetyltransferase; the sequence is GVMLRDPARF…AGWQRPAKKK (206 aa). Positions 330 and 348 each coordinate UDP-N-acetyl-alpha-D-glucosamine. H360 serves as the catalytic Proton acceptor. Y363 and N374 together coordinate UDP-N-acetyl-alpha-D-glucosamine. Acetyl-CoA-binding positions include A377, 383–384, S402, A420, and R437; that span reads NY.

The protein in the N-terminal section; belongs to the N-acetylglucosamine-1-phosphate uridyltransferase family. This sequence in the C-terminal section; belongs to the transferase hexapeptide repeat family. Homotrimer. Mg(2+) is required as a cofactor.

It is found in the cytoplasm. It catalyses the reaction alpha-D-glucosamine 1-phosphate + acetyl-CoA = N-acetyl-alpha-D-glucosamine 1-phosphate + CoA + H(+). The enzyme catalyses N-acetyl-alpha-D-glucosamine 1-phosphate + UTP + H(+) = UDP-N-acetyl-alpha-D-glucosamine + diphosphate. It functions in the pathway nucleotide-sugar biosynthesis; UDP-N-acetyl-alpha-D-glucosamine biosynthesis; N-acetyl-alpha-D-glucosamine 1-phosphate from alpha-D-glucosamine 6-phosphate (route II): step 2/2. The protein operates within nucleotide-sugar biosynthesis; UDP-N-acetyl-alpha-D-glucosamine biosynthesis; UDP-N-acetyl-alpha-D-glucosamine from N-acetyl-alpha-D-glucosamine 1-phosphate: step 1/1. It participates in bacterial outer membrane biogenesis; LPS lipid A biosynthesis. Catalyzes the last two sequential reactions in the de novo biosynthetic pathway for UDP-N-acetylglucosamine (UDP-GlcNAc). The C-terminal domain catalyzes the transfer of acetyl group from acetyl coenzyme A to glucosamine-1-phosphate (GlcN-1-P) to produce N-acetylglucosamine-1-phosphate (GlcNAc-1-P), which is converted into UDP-GlcNAc by the transfer of uridine 5-monophosphate (from uridine 5-triphosphate), a reaction catalyzed by the N-terminal domain. The sequence is that of Bifunctional protein GlmU from Vibrio cholerae serotype O1 (strain ATCC 39541 / Classical Ogawa 395 / O395).